The following is a 144-amino-acid chain: Large ribosomal subunit protein uL15 (144 aa).

The interval 1 to 54 (MRLNTLSPAAGSKHAPKRVGRGMGSGLGKTAGRGHKGQKSRSGGGVRPGFEGGQ) is disordered. Gly residues-rich tracts occupy residues 21–31 (RGMGSGLGKTA) and 42–52 (SGGGVRPGFEG).

It belongs to the universal ribosomal protein uL15 family. Part of the 50S ribosomal subunit.

Functionally, binds to the 23S rRNA. This chain is Large ribosomal subunit protein uL15, found in Shewanella baltica (strain OS223).